The primary structure comprises 804 residues: Probable replication endonuclease from prophage-like region (804 aa).

Residues Tyr498 and Tyr502 each act as O-(5'-phospho-DNA)-tyrosine intermediate in the active site.

This sequence belongs to the phage GPA family.

Functionally, possible endonuclease which induces a single-strand cut and initiates DNA replication. This is Probable replication endonuclease from prophage-like region from Shigella boydii serotype 4 (strain Sb227).